We begin with the raw amino-acid sequence, 537 residues long: Mitochondrial distribution and morphology protein 34 (537 aa).

One can recognise an SMP-LTD domain in the interval 1-195 (MAFNFNWSPL…LPAIIHRLSL (195 aa)). Disordered stretches follow at residues 320 to 339 (YTFS…RPSL), 348 to 403 (GLSL…IMPH), 421 to 493 (GRSP…DTSS), and 516 to 537 (KNGN…YEAR). A compositionally biased stretch (basic residues) spans 355–371 (RHSKAGRKKKTRVVNLR). The segment covering 378-391 (ANSEEEEDTPETDS) has biased composition (acidic residues). Over residues 425–441 (DLQQQPRRPSFRAQATN) the composition is skewed to polar residues.

Belongs to the MDM34 family. As to quaternary structure, component of the ER-mitochondria encounter structure (ERMES) or MDM complex, composed of MMM1, MDM10, MDM12 and MDM34.

It localises to the mitochondrion outer membrane. Functionally, component of the ERMES/MDM complex, which serves as a molecular tether to connect the endoplasmic reticulum (ER) and mitochondria. Components of this complex are involved in the control of mitochondrial shape and protein biogenesis, and function in nonvesicular lipid trafficking between the ER and mitochondria. MDM34 is required for the interaction of the ER-resident membrane protein MMM1 and the outer mitochondrial membrane-resident beta-barrel protein MDM10. The chain is Mitochondrial distribution and morphology protein 34 from Chaetomium globosum (strain ATCC 6205 / CBS 148.51 / DSM 1962 / NBRC 6347 / NRRL 1970) (Soil fungus).